Here is a 191-residue protein sequence, read N- to C-terminus: MKNIYLLYSIIDVSYTKALIVTNTHGSLYYASLGDKPEVLIVTMKKDFARFKNYVLQPIVGKANSEVSETLEKFRLMAEDPRLINTMHKQIPYEFIFGTELQRKVWNQLMNTNASETVCYSQMASNLGMPKSSRVVGAACGANKIALFVPCHRALTKSGQISGYRWGVPLKQRLLKLEQKPLQKESSLKEK.

Residues Y120 and R134 each contribute to the DNA site. The active-site Nucleophile; methyl group acceptor is C151.

This sequence belongs to the MGMT family.

The protein localises to the nucleus. It carries out the reaction a 6-O-methyl-2'-deoxyguanosine in DNA + L-cysteinyl-[protein] = S-methyl-L-cysteinyl-[protein] + a 2'-deoxyguanosine in DNA. The enzyme catalyses a 4-O-methyl-thymidine in DNA + L-cysteinyl-[protein] = a thymidine in DNA + S-methyl-L-cysteinyl-[protein]. In terms of biological role, involved in the cellular defense against the biological effects of O6-methylguanine (O6-MeG) and O4-methylthymine (O4-MeT) in DNA. Repairs the methylated nucleobase in DNA by stoichiometrically transferring the methyl group to a cysteine residue in the enzyme. This is a suicide reaction: the enzyme is irreversibly inactivated. The protein is Methylated-DNA--protein-cysteine methyltransferase (MGT1) of Debaryomyces hansenii (strain ATCC 36239 / CBS 767 / BCRC 21394 / JCM 1990 / NBRC 0083 / IGC 2968) (Yeast).